The following is a 197-amino-acid chain: Probable GTP-binding protein EngB (197 aa).

Positions 2–186 (KVKEVIFAGR…KRDLKQYLLS (185 aa)) constitute an EngB-type G domain. GTP contacts are provided by residues 10-17 (GRSNVGKS), 35-39 (GTTIR), 52-55 (DLPG), 132-135 (NKMD), and 166-168 (VCA). The Mg(2+) site is built by S17 and T37.

Belongs to the TRAFAC class TrmE-Era-EngA-EngB-Septin-like GTPase superfamily. EngB GTPase family. Mg(2+) is required as a cofactor.

In terms of biological role, necessary for normal cell division and for the maintenance of normal septation. In Archaeoglobus fulgidus (strain ATCC 49558 / DSM 4304 / JCM 9628 / NBRC 100126 / VC-16), this protein is Probable GTP-binding protein EngB.